The primary structure comprises 134 residues: Small ribosomal subunit protein uS11 (134 aa).

It belongs to the universal ribosomal protein uS11 family. Part of the 30S ribosomal subunit. Interacts with proteins S7 and S18. Binds to IF-3.

Functionally, located on the platform of the 30S subunit, it bridges several disparate RNA helices of the 16S rRNA. Forms part of the Shine-Dalgarno cleft in the 70S ribosome. The polypeptide is Small ribosomal subunit protein uS11 (Leptothrix cholodnii (strain ATCC 51168 / LMG 8142 / SP-6) (Leptothrix discophora (strain SP-6))).